The primary structure comprises 212 residues: ER lumen protein-retaining receptor 1-A (212 aa).

Residues 1–4 (MNIF) lie on the Lumenal side of the membrane. A helical transmembrane segment spans residues 5-24 (RFLGDISHLSAIFILLLKIW). The Cytoplasmic segment spans residues 25–32 (KSRSCAGI). Residues 33 to 52 (SGKSQLLFAIVFTARYLDLF) form a helical membrane-spanning segment. Residues 47 to 48 (RY) form an interaction with the K-D-E-L motif on target proteins region. At 53-58 (TNYISF) the chain is on the lumenal side. A helical transmembrane segment spans residues 59-79 (YNTSMKVVYVASSYATVWMIY). Residues 80–92 (SKFKATYDGNHDT) lie on the Cytoplasmic side of the membrane. Residues 93-110 (FRVEFLIVPTAILAFLVN) form a helical membrane-spanning segment. The Lumenal portion of the chain corresponds to 111-116 (HDFTPL). Residues 117–135 (EIFWTFSIYLESVAILPQL) traverse the membrane as a helical segment. At 136-149 (FMVSKTGEAETITS) the chain is on the cytoplasmic side. A helical membrane pass occupies residues 150 to 168 (HYLFALGIYRTLYLFNWIW). Positions 159–169 (RTLYLFNWIWR) are interaction with the K-D-E-L motif on target proteins. Residues 169–178 (RYQFEGFFDL) are Lumenal-facing. The helical transmembrane segment at 179-199 (IAIVAGLVQTVLYCDFFYLYV) threads the bilayer. The Cytoplasmic segment spans residues 200-212 (TKVLKGKKLSLPA). The important for recycling of cargo proteins with the sequence motif K-D-E-L from the Golgi to the endoplasmic reticulum stretch occupies residues 204–207 (KGKK).

This sequence belongs to the ERD2 family.

It localises to the golgi apparatus membrane. Its subcellular location is the cytoplasmic vesicle. It is found in the COPI-coated vesicle membrane. The protein resides in the endoplasmic reticulum membrane. The protein localises to the endoplasmic reticulum-Golgi intermediate compartment membrane. Receptor for the C-terminal sequence motif K-D-E-L that is present on endoplasmic reticulum resident proteins and that mediates their recycling from the Golgi back to the endoplasmic reticulum. In Xenopus laevis (African clawed frog), this protein is ER lumen protein-retaining receptor 1-A (kdelr1-a).